The primary structure comprises 344 residues: Glycerol-3-phosphate dehydrogenase [NAD(P)+] (344 aa).

5 residues coordinate NADPH: serine 11, tryptophan 12, histidine 32, arginine 33, and lysine 106. Sn-glycerol 3-phosphate is bound by residues lysine 106, glycine 136, and serine 138. An NADPH-binding site is contributed by alanine 140. The sn-glycerol 3-phosphate site is built by lysine 192, aspartate 245, serine 255, arginine 256, and asparagine 257. Lysine 192 serves as the catalytic Proton acceptor. Arginine 256 contributes to the NADPH binding site. NADPH-binding residues include valine 280 and glutamate 282.

Belongs to the NAD-dependent glycerol-3-phosphate dehydrogenase family.

Its subcellular location is the cytoplasm. The enzyme catalyses sn-glycerol 3-phosphate + NAD(+) = dihydroxyacetone phosphate + NADH + H(+). It catalyses the reaction sn-glycerol 3-phosphate + NADP(+) = dihydroxyacetone phosphate + NADPH + H(+). Its pathway is membrane lipid metabolism; glycerophospholipid metabolism. Functionally, catalyzes the reduction of the glycolytic intermediate dihydroxyacetone phosphate (DHAP) to sn-glycerol 3-phosphate (G3P), the key precursor for phospholipid synthesis. The protein is Glycerol-3-phosphate dehydrogenase [NAD(P)+] of Geobacillus kaustophilus (strain HTA426).